Reading from the N-terminus, the 509-residue chain is Maturase K (509 aa).

The protein belongs to the intron maturase 2 family. MatK subfamily.

It is found in the plastid. Its subcellular location is the chloroplast. Functionally, usually encoded in the trnK tRNA gene intron. Probably assists in splicing its own and other chloroplast group II introns. In Schlumbergera truncata (Thanksgiving cactus), this protein is Maturase K.